Here is a 311-residue protein sequence, read N- to C-terminus: tRNA dimethylallyltransferase (311 aa).

Position 13–20 (13–20 (GPTASGKT)) interacts with ATP. 15–20 (TASGKT) is a binding site for substrate. Interaction with substrate tRNA stretches follow at residues 38-41 (DSMQ) and 166-170 (QRVLR).

This sequence belongs to the IPP transferase family. As to quaternary structure, monomer. Mg(2+) is required as a cofactor.

It catalyses the reaction adenosine(37) in tRNA + dimethylallyl diphosphate = N(6)-dimethylallyladenosine(37) in tRNA + diphosphate. Catalyzes the transfer of a dimethylallyl group onto the adenine at position 37 in tRNAs that read codons beginning with uridine, leading to the formation of N6-(dimethylallyl)adenosine (i(6)A). The polypeptide is tRNA dimethylallyltransferase (Staphylococcus aureus (strain MRSA252)).